Consider the following 429-residue polypeptide: Histidine--tRNA ligase (429 aa).

The protein belongs to the class-II aminoacyl-tRNA synthetase family. As to quaternary structure, homodimer.

Its subcellular location is the cytoplasm. It catalyses the reaction tRNA(His) + L-histidine + ATP = L-histidyl-tRNA(His) + AMP + diphosphate + H(+). The protein is Histidine--tRNA ligase of Pseudomonas syringae pv. tomato (strain ATCC BAA-871 / DC3000).